A 410-amino-acid polypeptide reads, in one-letter code: Na(+)/H(+) antiporter NhaS4 (410 aa).

A run of 11 helical transmembrane segments spans residues 7 to 27 (LLIL…GLLF), 33 to 53 (PPVI…LGLL), 69 to 89 (FLYL…GLEL), 107 to 127 (VSIF…LYSL), 135 to 155 (FIPF…PVLA), 173 to 193 (LTCA…AIAV), 199 to 219 (IFGA…MVTL), 241 to 261 (LLTF…WIGI), 291 to 311 (FVST…TDLG), 319 to 339 (WAVC…GVYV), and 376 to 396 (GVIS…TTII).

This sequence belongs to the monovalent cation:proton antiporter 2 (CPA2) transporter (TC 2.A.37) family.

The protein localises to the membrane. In terms of biological role, na(+)/H(+) antiporter. The sequence is that of Na(+)/H(+) antiporter NhaS4 (nhaS4) from Synechocystis sp. (strain ATCC 27184 / PCC 6803 / Kazusa).